The sequence spans 212 residues: NEDD4 family-interacting protein 1 (212 aa).

The segment covering 1–14 (MSEQSSSSRYQQLQ) has biased composition (polar residues). The segment at 1–40 (MSEQSSSSRYQQLQNEEEPGENAQASADAPPPYSSIAGES) is disordered. Over 1-107 (MSEQSSSSRY…ADQLRIGNDG (107 aa)) the chain is Cytoplasmic. Short sequence motifs (PPxY motif) lie at residues 30–33 (PPPY) and 55–58 (PPSY). The helical transmembrane segment at 108 to 128 (IFMLTFFMAFLFNWIGFFLSF) threads the bilayer. Topologically, residues 129–134 (CLTSSA) are extracellular. Residues 135–155 (AGRYGAISGFGLSLIKWILIV) traverse the membrane as a helical segment. Residues 156 to 163 (RFSTYFPG) are Cytoplasmic-facing. Residues 164 to 184 (YFDGQYWLWWVFLVLGFLLFL) form a helical membrane-spanning segment. Residues 185-212 (RGFINYAKVRKMPDNFSTLPRTRVLFIY) lie on the Extracellular side of the membrane.

The protein localises to the golgi apparatus membrane. Its function is as follows. May play a role in Golgi structure maintenance. In Xenopus laevis (African clawed frog), this protein is NEDD4 family-interacting protein 1 (ndfip1).